Reading from the N-terminus, the 169-residue chain is S-ribosylhomocysteine lyase (169 aa).

Fe cation contacts are provided by histidine 54, histidine 58, and cysteine 129.

Belongs to the LuxS family. Homodimer. Fe cation serves as cofactor.

It catalyses the reaction S-(5-deoxy-D-ribos-5-yl)-L-homocysteine = (S)-4,5-dihydroxypentane-2,3-dione + L-homocysteine. Involved in the synthesis of autoinducer 2 (AI-2) which is secreted by bacteria and is used to communicate both the cell density and the metabolic potential of the environment. The regulation of gene expression in response to changes in cell density is called quorum sensing. Catalyzes the transformation of S-ribosylhomocysteine (RHC) to homocysteine (HC) and 4,5-dihydroxy-2,3-pentadione (DPD). The sequence is that of S-ribosylhomocysteine lyase from Glaesserella parasuis serovar 5 (strain SH0165) (Haemophilus parasuis).